Here is a 397-residue protein sequence, read N- to C-terminus: Flavohemoprotein A (397 aa).

One can recognise a Globin domain in the interval 2 to 137 (SLSQQSISII…IAQAFIDAEA (136 aa)). A heme b-binding site is contributed by His-84. Catalysis depends on charge relay system residues Tyr-94 and Glu-136. Residues 150–397 (WRDTREFIVD…YEIFGPLTNV (248 aa)) are reductase. Positions 151–266 (RDTREFIVDR…SPPAGDYVVD (116 aa)) constitute an FAD-binding FR-type domain. Residues Tyr-189 and 208–211 (RHYS) each bind FAD. 279–284 (GVGITP) is a binding site for NADP(+). 390–393 (IFGP) lines the FAD pocket.

Belongs to the globin family. Two-domain flavohemoproteins subfamily. It in the C-terminal section; belongs to the flavoprotein pyridine nucleotide cytochrome reductase family. It depends on FAD as a cofactor. Heme b is required as a cofactor.

The protein localises to the cytoplasm. It catalyses the reaction 2 nitric oxide + NADPH + 2 O2 = 2 nitrate + NADP(+) + H(+). It carries out the reaction 2 nitric oxide + NADH + 2 O2 = 2 nitrate + NAD(+) + H(+). Functionally, is involved in NO detoxification in an aerobic process, termed nitric oxide dioxygenase (NOD) reaction that utilizes O(2) and NAD(P)H to convert NO to nitrate, which protects the cell from various noxious nitrogen compounds. Therefore, plays a central role in the inducible response to nitrosative stress. In terms of biological role, in the presence of oxygen and NADH, it has NADH oxidase activity, which leads to the generation of superoxide and H(2)O(2). Under anaerobic conditions, it also exhibits nitric oxide reductase and FAD reductase activities. However, all these reactions are much lower than NOD activity. The sequence is that of Flavohemoprotein A (fhbA) from Dictyostelium discoideum (Social amoeba).